The primary structure comprises 105 residues: Small ribosomal subunit protein uS10 (105 aa).

It belongs to the universal ribosomal protein uS10 family. Part of the 30S ribosomal subunit.

Functionally, involved in the binding of tRNA to the ribosomes. The polypeptide is Small ribosomal subunit protein uS10 (Arthrospira platensis (Spirulina platensis)).